The sequence spans 908 residues: Translation initiation factor IF-2 (908 aa).

2 disordered regions span residues 52–229 (QSHG…AEEA) and 241–316 (AGQY…SAQH). Over residues 65 to 84 (KSKTTSTARVTGSSGKSKSV) the composition is skewed to polar residues. Basic and acidic residues-rich tracts occupy residues 94-108 (FEKP…ELAA), 120-138 (AAKD…EERQ), 176-185 (IEVKPKEQPK), 193-229 (PKVE…AEEA), 270-280 (SFEKERREIKR), and 294-303 (KNQDEREIKN). Positions 409–578 (TRPPVVTIMG…SLQAELMELE (170 aa)) constitute a tr-type G domain. The tract at residues 418-425 (GHVDHGKT) is G1. 418–425 (GHVDHGKT) lines the GTP pocket. The segment at 443 to 447 (GITQH) is G2. Positions 464-467 (DTPG) are G3. GTP contacts are provided by residues 464-468 (DTPGH) and 518-521 (NKMD). The tract at residues 518–521 (NKMD) is G4. A G5 region spans residues 554 to 556 (SAK).

This sequence belongs to the TRAFAC class translation factor GTPase superfamily. Classic translation factor GTPase family. IF-2 subfamily.

It localises to the cytoplasm. Its function is as follows. One of the essential components for the initiation of protein synthesis. Protects formylmethionyl-tRNA from spontaneous hydrolysis and promotes its binding to the 30S ribosomal subunits. Also involved in the hydrolysis of GTP during the formation of the 70S ribosomal complex. The polypeptide is Translation initiation factor IF-2 (Psychrobacter arcticus (strain DSM 17307 / VKM B-2377 / 273-4)).